A 301-amino-acid chain; its full sequence is Fluoroquinolones export ATP-binding protein Rv2688c (301 aa).

Residues 18 to 246 (IRVRGLTFRY…RSRRRVRVEY (229 aa)) enclose the ABC transporter domain. Residue 52–59 (GPSGAGKS) coordinates ATP.

This sequence belongs to the ABC transporter superfamily. In terms of assembly, the complex is composed of 2 ATP-binding proteins (Rv2688c) and 2 transmembrane proteins (Rv2686c and Rv2687c).

It is found in the cell membrane. With respect to regulation, inhibited by reserpine and verapamil. Part of the ABC transporter complex Rv2686c/Rv2687c/Rv2688c involved in fluoroquinolones export. Confers resistance to ciprofloxacin and, to a lesser extent, norfloxacin, moxifloxacin and sparfloxacin. Probably responsible for energy coupling to the transport system. The protein is Fluoroquinolones export ATP-binding protein Rv2688c of Mycobacterium tuberculosis (strain ATCC 25618 / H37Rv).